The following is a 541-amino-acid chain: Apolipoprotein N-acyltransferase (541 aa).

6 helical membrane passes run 21-41, 54-74, 89-109, 116-136, 157-177, and 189-209; these read MSWF…WYSL, LTSL…SWML, VLIS…FFIV, ILWC…YFLC, FGGF…GISF, and YVWL…YEYL. In terms of domain architecture, CN hydrolase spans 219–500; the sequence is LRVAVIQPAS…PGVLQVSLPM (282 aa). Glutamate 265 functions as the Proton acceptor in the catalytic mechanism. Lysine 350 is an active-site residue. Cysteine 405 functions as the Nucleophile in the catalytic mechanism. A helical membrane pass occupies residues 506-526; it reads LYAFWGDFPMIFLSLLSIGCI.

Belongs to the CN hydrolase family. Apolipoprotein N-acyltransferase subfamily.

Its subcellular location is the cell inner membrane. It carries out the reaction N-terminal S-1,2-diacyl-sn-glyceryl-L-cysteinyl-[lipoprotein] + a glycerophospholipid = N-acyl-S-1,2-diacyl-sn-glyceryl-L-cysteinyl-[lipoprotein] + a 2-acyl-sn-glycero-3-phospholipid + H(+). The protein operates within protein modification; lipoprotein biosynthesis (N-acyl transfer). Its function is as follows. Catalyzes the phospholipid dependent N-acylation of the N-terminal cysteine of apolipoprotein, the last step in lipoprotein maturation. The chain is Apolipoprotein N-acyltransferase from Chlamydia caviae (strain ATCC VR-813 / DSM 19441 / 03DC25 / GPIC) (Chlamydophila caviae).